We begin with the raw amino-acid sequence, 456 residues long: UPF0496 protein 4 (456 aa).

The helical transmembrane segment at 205 to 221 (SVTVFVCSIFVAVLSGS) threads the bilayer.

This sequence belongs to the ROH1 family.

The protein localises to the membrane. The protein is UPF0496 protein 4 of Oryza sativa subsp. indica (Rice).